Here is a 223-residue protein sequence, read N- to C-terminus: Ribonuclease 3 (223 aa).

The region spanning 3–125 is the RNase III domain; it reads LEKLQKKLGH…LIAAIYLDAG (123 aa). Glutamate 38 contacts Mg(2+). Aspartate 42 is a catalytic residue. Mg(2+) is bound by residues aspartate 111 and glutamate 114. Residue glutamate 114 is part of the active site. Residues 152-222 form the DRBM domain; the sequence is DPKTRLQEFL…AQQAIEKLKI (71 aa).

This sequence belongs to the ribonuclease III family. As to quaternary structure, homodimer. Mg(2+) is required as a cofactor.

It is found in the cytoplasm. The catalysed reaction is Endonucleolytic cleavage to 5'-phosphomonoester.. In terms of biological role, digests double-stranded RNA. Involved in the processing of primary rRNA transcript to yield the immediate precursors to the large and small rRNAs (23S and 16S). Processes some mRNAs, and tRNAs when they are encoded in the rRNA operon. Processes pre-crRNA and tracrRNA of type II CRISPR loci if present in the organism. The polypeptide is Ribonuclease 3 (Histophilus somni (strain 2336) (Haemophilus somnus)).